The chain runs to 156 residues: Small ribosomal subunit protein uS7c (156 aa).

The protein belongs to the universal ribosomal protein uS7 family. In terms of assembly, part of the 30S ribosomal subunit.

It is found in the plastid. The protein localises to the chloroplast. In terms of biological role, one of the primary rRNA binding proteins, it binds directly to 16S rRNA where it nucleates assembly of the head domain of the 30S subunit. The chain is Small ribosomal subunit protein uS7c (rps7) from Rhodomonas salina (Cryptomonas salina).